Here is a 388-residue protein sequence, read N- to C-terminus: Alanine racemase (388 aa).

The active-site Proton acceptor; specific for D-alanine is the K44. At K44 the chain carries N6-(pyridoxal phosphate)lysine. R142 is a binding site for substrate. Y273 serves as the catalytic Proton acceptor; specific for L-alanine. M321 serves as a coordination point for substrate.

Belongs to the alanine racemase family. Pyridoxal 5'-phosphate serves as cofactor.

It catalyses the reaction L-alanine = D-alanine. Its pathway is amino-acid biosynthesis; D-alanine biosynthesis; D-alanine from L-alanine: step 1/1. In terms of biological role, catalyzes the interconversion of L-alanine and D-alanine. May also act on other amino acids. In Mycobacterium ulcerans (strain Agy99), this protein is Alanine racemase (alr).